The following is a 512-amino-acid chain: 2,3-bisphosphoglycerate-independent phosphoglycerate mutase (512 aa).

The Mn(2+) site is built by Asp-13 and Ser-63. Ser-63 functions as the Phosphoserine intermediate in the catalytic mechanism. Residues His-124, 154–155 (RD), Arg-186, Arg-192, 262–265 (RPDR), and Lys-337 contribute to the substrate site. Mn(2+) is bound by residues Asp-404, His-408, Asp-445, His-446, and His-463.

Belongs to the BPG-independent phosphoglycerate mutase family. As to quaternary structure, monomer. The cofactor is Mn(2+).

The enzyme catalyses (2R)-2-phosphoglycerate = (2R)-3-phosphoglycerate. It functions in the pathway carbohydrate degradation; glycolysis; pyruvate from D-glyceraldehyde 3-phosphate: step 3/5. In terms of biological role, essential for rapid growth and for sporulation. Catalyzes the interconversion of 2-phosphoglycerate and 3-phosphoglycerate. This is 2,3-bisphosphoglycerate-independent phosphoglycerate mutase from Oceanobacillus iheyensis (strain DSM 14371 / CIP 107618 / JCM 11309 / KCTC 3954 / HTE831).